The following is a 519-amino-acid chain: Probable pectinesterase/pectinesterase inhibitor 36 (519 aa).

Residues 1–25 (MSTFVKVTDLITIMFFLAIAAVITA) form the signal peptide. Residues 27–141 (NTAELDVLEM…TFVLHEALAF (115 aa)) are pectinesterase inhibitor 36. Residues N92 and N130 are each glycosylated (N-linked (GlcNAc...) asparagine). Residues 147-196 (GHMKKRLHGPARQGHGPTRPKHRPTRPNHGPGRSHHGPSRPNQNGGMLVS) are disordered. Over residues 164–184 (TRPKHRPTRPNHGPGRSHHGP) the composition is skewed to basic residues. Polar residues predominate over residues 186-196 (RPNQNGGMLVS). Residues 205–505 (DFVVARDGSA…FTVSRFIQGD (301 aa)) form a pectinesterase 36 region. Substrate is bound by residues T283 and Q313. The active-site Proton donor; for pectinesterase activity is D336. The active-site Nucleophile; for pectinesterase activity is D357. R425 and W427 together coordinate substrate.

This sequence in the N-terminal section; belongs to the PMEI family. In the C-terminal section; belongs to the pectinesterase family. As to expression, expressed in siliques.

It localises to the secreted. Its subcellular location is the cell wall. The catalysed reaction is [(1-&gt;4)-alpha-D-galacturonosyl methyl ester](n) + n H2O = [(1-&gt;4)-alpha-D-galacturonosyl](n) + n methanol + n H(+). It participates in glycan metabolism; pectin degradation; 2-dehydro-3-deoxy-D-gluconate from pectin: step 1/5. Functionally, acts in the modification of cell walls via demethylesterification of cell wall pectin. This Arabidopsis thaliana (Mouse-ear cress) protein is Probable pectinesterase/pectinesterase inhibitor 36 (PME36).